The following is a 450-amino-acid chain: uncharacterized protein (450 aa).

A TRAM domain is found at 1 to 58 (MAKGEIVTVKIEEMDFKGYGVGYCEGKPLKVRGGILGQRVAVRVKKGKKGRAEGEIVE). The [4Fe-4S] cluster site is built by Cys71, Cys77, Cys80, and Cys159. Gln285, Tyr314, Glu335, and Asp380 together coordinate S-adenosyl-L-methionine. Cys407 (nucleophile) is an active-site residue.

The protein belongs to the class I-like SAM-binding methyltransferase superfamily. RNA M5U methyltransferase family.

This is an uncharacterized protein from Caldanaerobacter subterraneus subsp. tengcongensis (strain DSM 15242 / JCM 11007 / NBRC 100824 / MB4) (Thermoanaerobacter tengcongensis).